The following is a 264-amino-acid chain: Thymidylate synthase (264 aa).

R21 serves as a coordination point for dUMP. Residue H51 coordinates (6R)-5,10-methylene-5,6,7,8-tetrahydrofolate. A dUMP-binding site is contributed by 126–127; it reads RR. C146 acts as the Nucleophile in catalysis. DUMP contacts are provided by residues 166–169, N177, and 207–209; these read RSAD and HLY. (6R)-5,10-methylene-5,6,7,8-tetrahydrofolate is bound at residue D169. A (6R)-5,10-methylene-5,6,7,8-tetrahydrofolate-binding site is contributed by A263.

Belongs to the thymidylate synthase family. Bacterial-type ThyA subfamily. As to quaternary structure, homodimer.

Its subcellular location is the cytoplasm. It carries out the reaction dUMP + (6R)-5,10-methylene-5,6,7,8-tetrahydrofolate = 7,8-dihydrofolate + dTMP. It functions in the pathway pyrimidine metabolism; dTTP biosynthesis. Its function is as follows. Catalyzes the reductive methylation of 2'-deoxyuridine-5'-monophosphate (dUMP) to 2'-deoxythymidine-5'-monophosphate (dTMP) while utilizing 5,10-methylenetetrahydrofolate (mTHF) as the methyl donor and reductant in the reaction, yielding dihydrofolate (DHF) as a by-product. This enzymatic reaction provides an intracellular de novo source of dTMP, an essential precursor for DNA biosynthesis. This Rhizobium johnstonii (strain DSM 114642 / LMG 32736 / 3841) (Rhizobium leguminosarum bv. viciae) protein is Thymidylate synthase.